We begin with the raw amino-acid sequence, 292 residues long: Undecaprenyl-diphosphatase (292 aa).

7 helical membrane passes run 1-21, 46-66, 90-110, 114-134, 192-212, 225-245, and 253-273; these read MSLVSAALFGLLQALTEFLPV, FVTIIQAGTTLAVLVYFRADI, LGWYIVLGTVPAALAGKLLEH, ALGNWVIAGSLVALGLVLLAA, FLLSVPITLAAGAYKLWSTVP, VVGTVVSAVAGYLVIDWLLAW, and VFVVWRLAAGAAIAALILSGV.

Belongs to the UppP family.

The protein resides in the cell inner membrane. The enzyme catalyses di-trans,octa-cis-undecaprenyl diphosphate + H2O = di-trans,octa-cis-undecaprenyl phosphate + phosphate + H(+). Functionally, catalyzes the dephosphorylation of undecaprenyl diphosphate (UPP). Confers resistance to bacitracin. The chain is Undecaprenyl-diphosphatase from Anaeromyxobacter dehalogenans (strain 2CP-1 / ATCC BAA-258).